Consider the following 144-residue polypeptide: MSNAYEEYMRQMVIPMRQELVRSGFEELTTEEAVTEFMENTTGTTLVVVNSVCGCAAGLARPSAGQAVVRAEKQPDHLVTVFAGQDKDATAKMREYFGEIPPSSPSMALLKGKEVVHFIHRHEIEGATMDEIITNLEQAFEKNC.

This sequence belongs to the bacilliredoxin family.

The polypeptide is Bacilliredoxin BCE33L1972 (Bacillus cereus (strain ZK / E33L)).